We begin with the raw amino-acid sequence, 335 residues long: Beta-hexosaminidase (335 aa).

Substrate contacts are provided by residues Asp60, Arg68, Arg133, and 163–164 (KH). His176 acts as the Proton donor/acceptor in catalysis. Asp247 serves as the catalytic Nucleophile.

This sequence belongs to the glycosyl hydrolase 3 family. NagZ subfamily.

Its subcellular location is the cytoplasm. The catalysed reaction is Hydrolysis of terminal non-reducing N-acetyl-D-hexosamine residues in N-acetyl-beta-D-hexosaminides.. The protein operates within cell wall biogenesis; peptidoglycan recycling. Functionally, plays a role in peptidoglycan recycling by cleaving the terminal beta-1,4-linked N-acetylglucosamine (GlcNAc) from peptide-linked peptidoglycan fragments, giving rise to free GlcNAc, anhydro-N-acetylmuramic acid and anhydro-N-acetylmuramic acid-linked peptides. The polypeptide is Beta-hexosaminidase (Stenotrophomonas maltophilia (strain K279a)).